A 188-amino-acid polypeptide reads, in one-letter code: Protein SSX3 (188 aa).

The region spanning 20-83 (KIQKAFDDIA…KRVTDFQGND (64 aa)) is the KRAB-related domain. Residues 113–162 (PKKPAEEGNVSKEVPEASGPQNDGKQLCPPGKPTTSEKINMISGPKRGEH) are disordered. Residues 115–127 (KPAEEGNVSKEVP) show a composition bias toward basic and acidic residues. Position 123 is a phosphoserine (serine 123).

Belongs to the SSX family. As to quaternary structure, interacts with SSX2IP.

Functionally, could act as a modulator of transcription. The sequence is that of Protein SSX3 (SSX3) from Homo sapiens (Human).